A 446-amino-acid polypeptide reads, in one-letter code: T-box transcription factor TBX19 (446 aa).

The T-box DNA-binding region spans 43-216 (LEDAPLWQRF…YNPFAKAFLD (174 aa)).

The protein resides in the nucleus. In terms of biological role, transcriptional regulator involved in developmental processes. Can activate POMC gene expression and repress the alpha glycoprotein subunit and thyroid-stimulating hormone beta promoters. This is T-box transcription factor TBX19 from Mus musculus (Mouse).